The chain runs to 392 residues: Queuine tRNA-ribosyltransferase (392 aa).

Asp93 acts as the Proton acceptor in catalysis. Substrate is bound by residues Asp93–Tyr97, Asp147, Gln189, and Gly216. The tract at residues Gly247–Asp253 is RNA binding. The Nucleophile role is filled by Asp266. The tract at residues Thr271–Arg275 is RNA binding; important for wobble base 34 recognition. 4 residues coordinate Zn(2+): Cys304, Cys306, Cys309, and His335.

It belongs to the queuine tRNA-ribosyltransferase family. Homodimer. Within each dimer, one monomer is responsible for RNA recognition and catalysis, while the other monomer binds to the replacement base PreQ1. Zn(2+) serves as cofactor.

It catalyses the reaction 7-aminomethyl-7-carbaguanine + guanosine(34) in tRNA = 7-aminomethyl-7-carbaguanosine(34) in tRNA + guanine. It functions in the pathway tRNA modification; tRNA-queuosine biosynthesis. Its function is as follows. Catalyzes the base-exchange of a guanine (G) residue with the queuine precursor 7-aminomethyl-7-deazaguanine (PreQ1) at position 34 (anticodon wobble position) in tRNAs with GU(N) anticodons (tRNA-Asp, -Asn, -His and -Tyr). Catalysis occurs through a double-displacement mechanism. The nucleophile active site attacks the C1' of nucleotide 34 to detach the guanine base from the RNA, forming a covalent enzyme-RNA intermediate. The proton acceptor active site deprotonates the incoming PreQ1, allowing a nucleophilic attack on the C1' of the ribose to form the product. After dissociation, two additional enzymatic reactions on the tRNA convert PreQ1 to queuine (Q), resulting in the hypermodified nucleoside queuosine (7-(((4,5-cis-dihydroxy-2-cyclopenten-1-yl)amino)methyl)-7-deazaguanosine). This Dehalococcoides mccartyi (strain ATCC BAA-2100 / JCM 16839 / KCTC 5957 / BAV1) protein is Queuine tRNA-ribosyltransferase.